The primary structure comprises 178 residues: Adenine phosphoribosyltransferase (178 aa).

This sequence belongs to the purine/pyrimidine phosphoribosyltransferase family. In terms of assembly, homodimer.

It localises to the cytoplasm. The catalysed reaction is AMP + diphosphate = 5-phospho-alpha-D-ribose 1-diphosphate + adenine. The protein operates within purine metabolism; AMP biosynthesis via salvage pathway; AMP from adenine: step 1/1. Its function is as follows. Catalyzes a salvage reaction resulting in the formation of AMP, that is energically less costly than de novo synthesis. This chain is Adenine phosphoribosyltransferase, found in Bacteroides fragilis (strain YCH46).